We begin with the raw amino-acid sequence, 512 residues long: Glucagon-like peptide 2 receptor (512 aa).

Over 1–135 (MRRLWGPGTP…KQNVDHYHHT (135 aa)) the chain is Extracellular. Intrachain disulfides connect cysteine 43–cysteine 65, cysteine 56–cysteine 97, and cysteine 78–cysteine 119. A glycan (N-linked (GlcNAc...) asparagine) is linked at asparagine 73. The helical transmembrane segment at 136-160 (LLSTLQLMYTVGYSLSLISLFLALT) threads the bilayer. Residues 161–172 (LFLFLRKLHCTR) lie on the Cytoplasmic side of the membrane. Residues 173–197 (NYIHMNLFASFILRALVVLVKDMVF) traverse the membrane as a helical segment. The Extracellular segment spans residues 198-223 (YNSYSRRPDSESGWMSYLSEISASCR). Residues 224–247 (SVQVLLHYFVGTNHLWLLVEGLYL) traverse the membrane as a helical segment. The Cytoplasmic segment spans residues 248–261 (HALLEPTVLPERRL). The helical transmembrane segment at 262-283 (WPKYLVVGWAFPMLFVIPWIFV) threads the bilayer. At 284–301 (RASLENTGCWAVNENKKI) the chain is on the extracellular side. A helical transmembrane segment spans residues 302-324 (WWIIRGPILLCVTVNFFIFLKIL). The Cytoplasmic segment spans residues 325 to 348 (KLLISKFRAHQMCFRDYKYRLAKS). Residues 349–367 (TLLLILLMGVHEFLFTFFT) form a helical membrane-spanning segment. Over 368–379 (DDQVQGFSRLIR) the chain is Extracellular. A helical membrane pass occupies residues 380 to 400 (LFIQLTLSSFHGFLVALQYGF). Over 401-512 (ASREVKAELR…MEEILEESEI (112 aa)) the chain is Cytoplasmic. The interval 458 to 494 (SGVSSHLTAGNLRDHGAQPHRGRGAWPRASSLSESSE) is disordered.

Belongs to the G-protein coupled receptor 2 family.

Its subcellular location is the cell membrane. This is a receptor for glucagon-like peptide 2. The activity of this receptor is mediated by G proteins which activate adenylyl cyclase. This is Glucagon-like peptide 2 receptor (Glp2r) from Mus musculus (Mouse).